Consider the following 1045-residue polypeptide: 3-hydroxy-3-methylglutaryl-coenzyme A reductase 2 (1045 aa).

Residues 1–24 (MSLPLKTIVHLVKPFACTARFSAR) lie on the Cytoplasmic side of the membrane. A helical membrane pass occupies residues 25-45 (YPIHVIVVAVLLSAAAYLSVT). The Lumenal portion of the chain corresponds to 46-186 (QSYLNEWKLD…FSNKTSEFDQ (141 aa)). N-linked (GlcNAc...) asparagine glycans are attached at residues Asn115, Asn150, Asn158, and Asn179. A helical transmembrane segment spans residues 187-207 (FDLFIILAAYLTLFYTLCCLF). The SSD domain maps to 188 to 356 (DLFIILAAYL…ATFYSAILSM (169 aa)). At 208–216 (NDMRKIGSK) the chain is on the cytoplasmic side. A helical membrane pass occupies residues 217-237 (FWLSFSALSNSACALYLSLYT). At 238–243 (THSLLK) the chain is on the lumenal side. A helical membrane pass occupies residues 244–264 (KPASLLSLVIGLPFIVVIIGF). Topologically, residues 265–301 (KHKVRLAAFSLQKFHRISIDKKITVSNIIYEAMFQEG) are cytoplasmic. A helical membrane pass occupies residues 302–322 (AYLIRDYLFYISSFIGCAIYA). At 323–324 (RH) the chain is on the lumenal side. The chain crosses the membrane as a helical span at residues 325–345 (LPGLVNFCILSTFMLVFDLLL). Residues 346–402 (SATFYSAILSMKLEINIIHRSTVIRQTLEEDGVVPTTADIIYKDETASEPHFLRSNV) lie on the Cytoplasmic side of the membrane. A helical transmembrane segment spans residues 403-423 (AIILGKASVIGLLLLINLYVF). Topologically, residues 424–497 (TDKLNATILN…DSVSNAIRDQ (74 aa)) are lumenal. Asn428 and Asn455 each carry an N-linked (GlcNAc...) asparagine glycan. Residues 498 to 518 (FISKLLFFAFAVSISINVYLL) form a helical membrane-spanning segment. At 519 to 1045 (NAAKIHTGYM…GPPCKTSALL (527 aa)) the chain is on the cytoplasmic side. Thr565 bears the Phosphothreonine mark. Residue Glu710 is the Charge relay system of the active site. 716-722 (SAMRGCK) serves as a coordination point for CoA. NADP(+) contacts are provided by residues 777-779 (SRF) and 804-812 (DAMGMNMIS). Residue Lys844 is the Charge relay system of the active site. 873-875 (VLK) serves as a coordination point for CoA. Asp920 functions as the Charge relay system in the catalytic mechanism. 1015-1016 (SH) serves as a coordination point for CoA. Catalysis depends on His1016, which acts as the Proton donor. The segment at 1018 to 1045 (THNRKTNKANELPQPSNKGPPCKTSALL) is disordered. 1020 to 1021 (NR) serves as a coordination point for NADP(+).

Belongs to the HMG-CoA reductase family.

The protein resides in the endoplasmic reticulum membrane. It localises to the nucleus envelope. It carries out the reaction (R)-mevalonate + 2 NADP(+) + CoA = (3S)-3-hydroxy-3-methylglutaryl-CoA + 2 NADPH + 2 H(+). The protein operates within metabolic intermediate biosynthesis; (R)-mevalonate biosynthesis; (R)-mevalonate from acetyl-CoA: step 3/3. In terms of biological role, HMG-CoA reductase; part of the first module of ergosterol biosynthesis pathway constitutes by the early steps of the pathway, conserved across all eukaryotes, and which results in the formation of mevalonate from acetyl-coenzyme A (acetyl-CoA). HMG1 and HMG2 catalyze the reduction of hydroxymethylglutaryl-CoA (HMG-CoA) to mevalonate that is the rate-limiting step within the first mosule. The first module starts with the action of the cytosolic acetyl-CoA acetyltransferase ERG10 that catalyzes the formation of acetoacetyl-CoA. The hydroxymethylglutaryl-CoA synthase ERG13 then condenses acetyl-CoA with acetoacetyl-CoA to form HMG-CoA. The rate-limiting step of the early module is the reduction to mevalonate by the 3-hydroxy-3-methylglutaryl-coenzyme A (HMG-CoA) reductases HMG1 and HMG2 which are derived from a single ancestral HMGR gene by gene duplication. The sequence is that of 3-hydroxy-3-methylglutaryl-coenzyme A reductase 2 from Saccharomyces cerevisiae (strain ATCC 204508 / S288c) (Baker's yeast).